The sequence spans 712 residues: Matrix metalloproteinase-9 (712 aa).

Positions 1 to 19 (MSPLQPLVLALLVLACCSA) are cleaved as a signal peptide. Residues 20 to 106 (VPRRRQPTVV…PRCGVPDVGR (87 aa)) constitute a propeptide, activation peptide. The N-linked (GlcNAc...) asparagine glycan is linked to Asn38. The Cysteine switch motif lies at 97-104 (PRCGVPDV). Residue Cys99 coordinates Zn(2+). Residues Asn120 and Asn127 are each glycosylated (N-linked (GlcNAc...) asparagine). Ca(2+) is bound by residues Asp131 and Asp165. Zn(2+) contacts are provided by His175 and Asp177. Residues Asp182, Gly183, Asn185, and Leu187 each contribute to the Ca(2+) site. His190 lines the Zn(2+) pocket. The Ca(2+) site is built by Gly197, Gln199, and Asp201. A Zn(2+)-binding site is contributed by His203. Ca(2+) contacts are provided by Asp205, Asp206, and Glu208. 3 Fibronectin type-II domains span residues 225-273 (AKGA…FCPS), 283-331 (ADGK…FCPT), and 342-390 (AAGE…FCPD). 6 disulfide bridges follow: Cys230–Cys256, Cys244–Cys271, Cys288–Cys314, Cys302–Cys329, Cys347–Cys373, and Cys361–Cys388. His401 contributes to the Zn(2+) binding site. Glu402 is an active-site residue. Residues His405 and His411 each coordinate Zn(2+). The disordered stretch occupies residues 440 to 519 (QHLYGPRPEP…PTESPDPAED (80 aa)). The segment covering 455–465 (TTTTTTTTEPQ) has biased composition (low complexity). Over residues 491 to 504 (TGPPAAGPTGPPTA) the composition is skewed to pro residues. Low complexity predominate over residues 505-514 (GPSAAPTESP). Residues Cys521 and Cys709 are joined by a disulfide bond. Hemopexin repeat units follow at residues 523–568 (VDIF…WPAL), 569–613 (PRKL…GLGP), 615–662 (VAQV…FPGV), and 663–709 (PIST…LLKC).

It belongs to the peptidase M10A family. In terms of assembly, exists as monomer or homodimer; disulfide-linked. Also exists as heterodimer with LCN2. Macrophages and transformed cell lines produce only the monomeric form. Interacts with ECM1. Requires Zn(2+) as cofactor. It depends on Ca(2+) as a cofactor. Post-translationally, N- and O-glycosylated.

It localises to the secreted. It is found in the extracellular space. Its subcellular location is the extracellular matrix. It catalyses the reaction Cleavage of gelatin types I and V and collagen types IV and V.. Matrix metalloproteinase that plays an essential role in local proteolysis of the extracellular matrix and in leukocyte migration. Could play a role in bone osteoclastic resorption. Cleaves KiSS1 at a Gly-|-Leu bond. Cleaves NINJ1 to generate the Secreted ninjurin-1 form. Cleaves type IV and type V collagen into large C-terminal three quarter fragments and shorter N-terminal one quarter fragments. Degrades fibronectin but not laminin or Pz-peptide. In Bos taurus (Bovine), this protein is Matrix metalloproteinase-9.